Consider the following 349-residue polypeptide: Green-sensitive opsin-1 (349 aa).

Residues 1 to 36 (MNGTEGKNFYVPMSNRTGLVRSPFEYPQYYLAEPWQ) lie on the Extracellular side of the membrane. 2 N-linked (GlcNAc...) asparagine glycosylation sites follow: Asn-2 and Asn-15. The chain crosses the membrane as a helical span at residues 37–61 (FKILALYLFFLMSMGLPINGLTLVV). Over 62–73 (TAQHKKLRQPLN) the chain is Cytoplasmic. A helical membrane pass occupies residues 74-99 (FILVNLAVAGTIMVCFGFTVTFYTAI). Topologically, residues 100 to 113 (NGYFVLGPTGCAVE) are extracellular. Cys-110 and Cys-187 are disulfide-bonded. Residues 114-133 (GFMATLGGEVALWSLVVLAI) traverse the membrane as a helical segment. Residues 134–152 (ERYIVVCKPMGSFKFSSSH) lie on the Cytoplasmic side of the membrane. The helical transmembrane segment at 153 to 176 (AFAGIAFTWVMALACAAPPLFGWS) threads the bilayer. Over 177–202 (RYIPEGMQCSCGPDYYTLNPDYNNES) the chain is Extracellular. The helical transmembrane segment at 203 to 230 (YVIYMFVCHFILPVAVIFFTYGRLVCTV) threads the bilayer. The Cytoplasmic segment spans residues 231-252 (KAAAAQQQDSASTQKAEREVTK). The chain crosses the membrane as a helical span at residues 253–276 (MVILMVFGFLIAWTPYATVAAWIF). At 277–284 (FNKGADFS) the chain is on the extracellular side. The helical transmembrane segment at 285 to 309 (AKFMAIPAFFSKSSALYNPVIYVLL) threads the bilayer. At Lys-296 the chain carries N6-(retinylidene)lysine. Residues 310–349 (NKQFRNCMLTTIFCGKNPLGDDESSTVSTSKTEVSSVSPA) are Cytoplasmic-facing. Residues 329-349 (GDDESSTVSTSKTEVSSVSPA) are disordered. Over residues 334–349 (STVSTSKTEVSSVSPA) the composition is skewed to low complexity.

The protein belongs to the G-protein coupled receptor 1 family. Opsin subfamily. Phosphorylated on some or all of the serine and threonine residues present in the C-terminal region. As to expression, the color pigments are found in the cone photoreceptor cells.

The protein resides in the membrane. Visual pigments are the light-absorbing molecules that mediate vision. They consist of an apoprotein, opsin, covalently linked to cis-retinal. The polypeptide is Green-sensitive opsin-1 (Carassius auratus (Goldfish)).